A 227-amino-acid chain; its full sequence is Cytidylate kinase (227 aa).

Gly-10–Thr-18 contacts ATP.

The protein belongs to the cytidylate kinase family. Type 1 subfamily.

The protein resides in the cytoplasm. The enzyme catalyses CMP + ATP = CDP + ADP. It carries out the reaction dCMP + ATP = dCDP + ADP. The polypeptide is Cytidylate kinase (Streptococcus agalactiae serotype V (strain ATCC BAA-611 / 2603 V/R)).